The chain runs to 208 residues: Large ribosomal subunit protein bL25 (208 aa).

It belongs to the bacterial ribosomal protein bL25 family. CTC subfamily. In terms of assembly, part of the 50S ribosomal subunit; part of the 5S rRNA/L5/L18/L25 subcomplex. Contacts the 5S rRNA. Binds to the 5S rRNA independently of L5 and L18.

Functionally, this is one of the proteins that binds to the 5S RNA in the ribosome where it forms part of the central protuberance. The sequence is that of Large ribosomal subunit protein bL25 from Burkholderia thailandensis (strain ATCC 700388 / DSM 13276 / CCUG 48851 / CIP 106301 / E264).